The following is a 368-amino-acid chain: 3-dehydroquinate synthase (368 aa).

Residues 112-116 (GVVGD), 136-137 (TT), lysine 149, lysine 158, and 176-179 (FLDT) each bind NAD(+). 3 residues coordinate Zn(2+): glutamate 191, histidine 257, and histidine 274.

This sequence belongs to the sugar phosphate cyclases superfamily. Dehydroquinate synthase family. The cofactor is Co(2+). Zn(2+) serves as cofactor. It depends on NAD(+) as a cofactor.

The protein resides in the cytoplasm. It carries out the reaction 7-phospho-2-dehydro-3-deoxy-D-arabino-heptonate = 3-dehydroquinate + phosphate. The protein operates within metabolic intermediate biosynthesis; chorismate biosynthesis; chorismate from D-erythrose 4-phosphate and phosphoenolpyruvate: step 2/7. In terms of biological role, catalyzes the conversion of 3-deoxy-D-arabino-heptulosonate 7-phosphate (DAHP) to dehydroquinate (DHQ). The sequence is that of 3-dehydroquinate synthase from Natranaerobius thermophilus (strain ATCC BAA-1301 / DSM 18059 / JW/NM-WN-LF).